A 1083-amino-acid chain; its full sequence is Ubiquitin-protein ligase E3C (1083 aa).

2 stretches are compositionally biased toward basic and acidic residues: residues Met1–Thr10 and Ser20–Glu40. The interval Met1–Glu40 is disordered. The cis-determinant of acceptor ubiquitin-binding stretch occupies residues Met1–Arg60. Residues Arg45–Asp74 form the IQ domain. The segment at Ala354 to Val386 is disordered. Residues Ser366 to Asp376 are compositionally biased toward acidic residues. Residues Asn744–Ser1083 form the HECT domain. Residue Lys903 forms a Glycyl lysine isopeptide (Lys-Gly) (interchain with G-Cter in ubiquitin); by autocatalysis linkage. Cys1051 acts as the Glycyl thioester intermediate in catalysis.

It belongs to the UBE3C family. As to quaternary structure, interacts with 26S proteasomes. Interacts (via the HECT domain) with UBE2D1 and, less efficiently, with UBE2L3. In terms of processing, autoubiquitinated; promoting its own degradation.

The enzyme catalyses S-ubiquitinyl-[E2 ubiquitin-conjugating enzyme]-L-cysteine + [acceptor protein]-L-lysine = [E2 ubiquitin-conjugating enzyme]-L-cysteine + N(6)-ubiquitinyl-[acceptor protein]-L-lysine.. It participates in protein modification; protein ubiquitination. Its function is as follows. E3 ubiquitin-protein ligase that specifically catalyzes 'Lys-29'- and 'Lys-48'-linked polyubiquitin chains. Accepts ubiquitin from the E2 ubiquitin-conjugating enzyme UBE2D1 in the form of a thioester and then directly transfers the ubiquitin to targeted substrates. Associates with the proteasome and promotes elongation of ubiquitin chains on substrates bound to the 26S proteasome. Also catalyzes 'Lys-29'- and 'Lys-48'-linked ubiquitination of 26S proteasome subunit ADRM1/RPN13 in response to proteotoxic stress, impairing the ability of the proteasome to bind and degrade ubiquitin-conjugated proteins. Acts as a negative regulator of autophagy by mediating 'Lys-29'- and 'Lys-48'-linked ubiquitination of PIK3C3/VPS34, promoting its degradation. Can assemble unanchored poly-ubiquitin chains in either 'Lys-29'- or 'Lys-48'-linked polyubiquitin chains; with some preference for 'Lys-48' linkages. Acts as a negative regulator of type I interferon by mediating 'Lys-48'-linked ubiquitination of IRF3 and IRF7, leading to their degradation by the proteasome. Catalyzes ubiquitination and degradation of CAND2. This Mus musculus (Mouse) protein is Ubiquitin-protein ligase E3C.